We begin with the raw amino-acid sequence, 1056 residues long: ISWI chromatin-remodeling complex ATPase CHR11 (1056 aa).

Positions 1 to 10 (MARNSNSDEA) are enriched in low complexity. 2 disordered regions span residues 1–80 (MARN…SKRE) and 133–175 (KSDG…GSGN). Composition is skewed to acidic residues over residues 11 to 32 (FSSE…EELE) and 60 to 73 (PVED…DEEK). The stretch at 12 to 105 (SSEEEEERVK…QEMLESQNAS (94 aa)) forms a coiled coil. A compositionally biased stretch (basic residues) spans 141–151 (KKAKGRGRHAS). Acidic residues predominate over residues 155–169 (EEEEDEEYLKEEEDG). The 166-residue stretch at 201-366 (IRLYENGING…WALLNFLLPE (166 aa)) folds into the Helicase ATP-binding domain. 214-221 (DEMGLGKT) is an ATP binding site. The short motif at 317–320 (DEAH) is the DEAH box element. Positions 494 to 645 (LLDKLLPKLK…ALVIQQGRLA (152 aa)) constitute a Helicase C-terminal domain. Disordered regions lie at residues 738–774 (WNDP…PRIP) and 814–833 (IDVE…EVEE). Acidic residues predominate over residues 815–833 (DVEEPEEGGDPLTTEEVEE). SANT domains follow at residues 840 to 892 (EGFS…ERYK) and 941 to 1002 (QNKG…DTLI). A disordered region spans residues 1011–1056 (EFDERERQARKEKKLAKSATPSKRPLGRQASESPSSTKKRKHLSMR). The segment covering 1047–1056 (TKKRKHLSMR) has biased composition (basic residues).

The protein belongs to the SNF2/RAD54 helicase family. ISWI subfamily. As to quaternary structure, interacts with RLT1 and RLT2. Interacts (via C-terminus) with RLT1 (via the DDT domain), RLT2 (via the DDT domain), PTM (via the DDT domain) and DDR4 (via the DDT domain). Binds to FGT1. In terms of tissue distribution, highly expressed in growing tissues such as inflorescence and flower meristems, young leaves and floral organs. Expressed in roots, rosette and cauline leaves, stems, flowers, inflorescences and siliques.

Its subcellular location is the nucleus. Its function is as follows. Possesses intrinsic ATP-dependent nucleosome-remodeling activity. Constitutes the catalytic subunit of several complexes capable of forming ordered nucleosome arrays on chromatin. Involved in the formation of nucleosome distribution patterns. Involved in nuclear proliferation during megagametogenesis and cell expansion in the sporophyte. Required for the maintenance of the plant vegetative phase. In association with RLT1 or RLT2 may prevent the early activation of the vegetative-to-reproductive transition by regulating key genes that contribute to flower timing, such as FT, SEP1, SEP3, AGL8/FUL, SOC1 and FLC. Necessary to acquire heat stress (HS) memory. This Arabidopsis thaliana (Mouse-ear cress) protein is ISWI chromatin-remodeling complex ATPase CHR11.